Reading from the N-terminus, the 111-residue chain is Repressed By RIM101 protein 1 (111 aa).

The signal sequence occupies residues 1–19; it reads MKFSTTLLALTASIAAVMS. The interval 71-90 is disordered; the sequence is SGASSATGGSSAAKSGSSSG. Residue S81 is the site of GPI-anchor amidated serine attachment. A propeptide spans 82–111 (removed in mature form); it reads AAKSGSSSGAGFAPVAGAGSLAAIAGLLLL.

Post-translationally, the GPI-anchor is attached to the protein in the endoplasmic reticulum and serves to target the protein to the cell surface. There, the glucosamine-inositol phospholipid moiety is cleaved off and the GPI-modified mannoprotein is covalently attached via its lipidless GPI glycan remnant to the 1,6-beta-glucan of the outer cell wall layer.

It is found in the secreted. Its subcellular location is the cell wall. The protein resides in the membrane. Functionally, probable cell wall protein required for filamentation at low pH. In Candida albicans (strain SC5314 / ATCC MYA-2876) (Yeast), this protein is Repressed By RIM101 protein 1 (RBR1).